Consider the following 265-residue polypeptide: Synaptoporin (265 aa).

Residues 1 to 4 (MCMV) are Cytoplasmic-facing. In terms of domain architecture, MARVEL spans 1 to 202 (MCMVIFAPLF…NIWFVFKETG (202 aa)). The helical transmembrane segment at 5 to 25 (IFAPLFAIFAFATCGGYSGGL) threads the bilayer. Over 26-81 (RLSVDCVNKTESNLSIDIAFAYPFRLHQVTFEVPTCEGKERQKLALVGDSSSSAEF) the chain is Vesicular. N-linked (GlcNAc...) asparagine glycans are attached at residues Asn33 and Asn38. A helical membrane pass occupies residues 82-102 (FVTVAVFAFLYSLAATVVYIF). Residues 103–114 (FQNKYRENNRGP) lie on the Cytoplasmic side of the membrane. A helical transmembrane segment spans residues 115 to 135 (LIDFIVTVVFSFLWLVGSSAW). Residues 136–177 (AKGLSDVKVATDPKEVLLLMSACKQPSNKCMAVHSPVMSSLN) lie on the Vesicular side of the membrane. The N-linked (GlcNAc...) asparagine glycan is linked to Asn177. Residues 178 to 198 (TSVVFGFLNFILWAGNIWFVF) traverse the membrane as a helical segment. Residues 199-265 (KETGWHSSGQ…SGPTSFNNQI (67 aa)) are Cytoplasmic-facing. The stretch at 210 to 214 (YLSDP) is repeat 1. Residues 210-242 (YLSDPMEKHSSSYNQGGYNQDSYGSSGGYSQQA) are 5 X approximate repeats. A phosphoserine mark is found at Ser212 and Ser220. Residues 221 to 265 (SYNQGGYNQDSYGSSGGYSQQASLGPTSDEFGQQPSGPTSFNNQI) form a disordered region. Repeat copies occupy residues 222–226 (YNQGG), 227–231 (YNQDS), 232–236 (YGSSG), and 238–242 (YSQQA). Residues 224–243 (QGGYNQDSYGSSGGYSQQAS) are compositionally biased toward low complexity. Residues 244–265 (LGPTSDEFGQQPSGPTSFNNQI) show a composition bias toward polar residues.

The protein belongs to the synaptophysin/synaptobrevin family. As to expression, central nervous system.

Its subcellular location is the cytoplasmic vesicle. It is found in the secretory vesicle. The protein localises to the synaptic vesicle membrane. The protein resides in the synapse. It localises to the synaptosome. Its function is as follows. Intrinsic membrane protein of small synaptic vesicles. Probable vesicular channel protein. The chain is Synaptoporin (Synpr) from Rattus norvegicus (Rat).